Reading from the N-terminus, the 209-residue chain is Kynurenine formamidase (209 aa).

W19 serves as a coordination point for substrate. Zn(2+)-binding residues include H49, H53, and D55. H59 serves as the catalytic Proton donor/acceptor. Zn(2+)-binding residues include H160 and E172.

This sequence belongs to the Cyclase 1 superfamily. KynB family. In terms of assembly, homodimer. Zn(2+) is required as a cofactor.

The enzyme catalyses N-formyl-L-kynurenine + H2O = L-kynurenine + formate + H(+). Its pathway is amino-acid degradation; L-tryptophan degradation via kynurenine pathway; L-kynurenine from L-tryptophan: step 2/2. In terms of biological role, catalyzes the hydrolysis of N-formyl-L-kynurenine to L-kynurenine, the second step in the kynurenine pathway of tryptophan degradation. The protein is Kynurenine formamidase of Ralstonia nicotianae (strain ATCC BAA-1114 / GMI1000) (Ralstonia solanacearum).